A 275-amino-acid chain; its full sequence is Elongation factor Ts (275 aa).

The segment at 80–83 (TDFV) is involved in Mg(2+) ion dislocation from EF-Tu.

Belongs to the EF-Ts family.

The protein resides in the cytoplasm. Functionally, associates with the EF-Tu.GDP complex and induces the exchange of GDP to GTP. It remains bound to the aminoacyl-tRNA.EF-Tu.GTP complex up to the GTP hydrolysis stage on the ribosome. The polypeptide is Elongation factor Ts (Clavibacter sepedonicus (Clavibacter michiganensis subsp. sepedonicus)).